Reading from the N-terminus, the 165-residue chain is Neurotrophin-3 (165 aa).

The first 3 residues, 1–3 (IQS), serve as a signal peptide directing secretion. Residues 4 to 119 (TSMDQGSLSE…VLNQTSRRKR (116 aa)) constitute a propeptide that is removed on maturation. N-linked (GlcNAc...) asparagine glycosylation occurs at N112.

This sequence belongs to the NGF-beta family.

The protein localises to the secreted. In terms of biological role, seems to promote the survival of visceral and proprioceptive sensory neurons. In Morelia spilota (Carpet python), this protein is Neurotrophin-3 (NTF3).